Here is a 391-residue protein sequence, read N- to C-terminus: 1-deoxy-D-xylulose 5-phosphate reductoisomerase (391 aa).

NADPH-binding residues include Thr11, Gly12, Ser13, Ile14, Gly37, Asn39, and Asn125. Lys126 is a 1-deoxy-D-xylulose 5-phosphate binding site. Glu127 serves as a coordination point for NADPH. Asp151 is a binding site for Mn(2+). 1-deoxy-D-xylulose 5-phosphate-binding residues include Ser152, Glu153, Ser176, and His199. A Mn(2+)-binding site is contributed by Glu153. Position 205 (Gly205) interacts with NADPH. Ser212, Asn217, Lys218, and Glu221 together coordinate 1-deoxy-D-xylulose 5-phosphate. Glu221 provides a ligand contact to Mn(2+).

It belongs to the DXR family. The cofactor is Mg(2+). It depends on Mn(2+) as a cofactor.

It carries out the reaction 2-C-methyl-D-erythritol 4-phosphate + NADP(+) = 1-deoxy-D-xylulose 5-phosphate + NADPH + H(+). Its pathway is isoprenoid biosynthesis; isopentenyl diphosphate biosynthesis via DXP pathway; isopentenyl diphosphate from 1-deoxy-D-xylulose 5-phosphate: step 1/6. In terms of biological role, catalyzes the NADPH-dependent rearrangement and reduction of 1-deoxy-D-xylulose-5-phosphate (DXP) to 2-C-methyl-D-erythritol 4-phosphate (MEP). This chain is 1-deoxy-D-xylulose 5-phosphate reductoisomerase, found in Heliobacterium modesticaldum (strain ATCC 51547 / Ice1).